The following is a 201-amino-acid chain: Ribonuclease MRP protein subunit RMP1 (201 aa).

Residues 86-108 (YWQFNGVIALGQFVTLGCTLVTL) traverse the membrane as a helical segment.

In terms of assembly, component of RNase MRP complex which consists of an RNA moiety and at least 10 protein subunits including POP1, POP3, POP4, POP5, POP6, POP7, POP8, RMP1, RPP1 and SNM1, many of which are shared with the RNase P complex.

The protein resides in the membrane. It is found in the cytoplasm. It localises to the nucleus. Functions as part of ribonuclease MRP (RNase MRP), which is involved in rRNA processing in mitochondria. The polypeptide is Ribonuclease MRP protein subunit RMP1 (Saccharomyces cerevisiae (strain ATCC 204508 / S288c) (Baker's yeast)).